The sequence spans 463 residues: T-box transcription factor TBX1 (463 aa).

2 disordered regions span residues Ser-39–Ala-58 and Gly-75–Lys-103. Positions Gly-75 to Ser-97 are enriched in low complexity. The segment at residues Leu-119–Asp-297 is a DNA-binding region (T-box). Disordered stretches follow at residues Arg-320–Gly-354 and Ser-367–His-405. Positions Asn-323–Gly-332 are enriched in polar residues. Residues Ser-333–Thr-347 show a composition bias toward basic and acidic residues. The span at Ser-367–Ser-380 shows a compositional bias: low complexity. A Nuclear localization signal motif is present at residues Lys-420–Ile-431.

As to quaternary structure, binds DNA as a dimer. Interacts with dscr6/ripply3.

Its subcellular location is the nucleus. Probable transcriptional regulator involved in developmental processes. Binds to the palindromic T site 5'-TTCACACCTAGGTGTGAA-3' DNA sequence. Induces pre-placodal ectoderm (PPE) gene expression in regions where RIPPLY3 is absent. Plays a role in the formation of the anteroposterior (AP) axis during embryonic development; required to establish the posterolateral border of the pre-placodal ectoderm (PPE) acting downstream of the retinoic acid receptor (RAR) signaling. This Xenopus tropicalis (Western clawed frog) protein is T-box transcription factor TBX1 (tbx1).